Here is a 300-residue protein sequence, read N- to C-terminus: Glycine betaine/carnitine transport binding protein GbuC (300 aa).

Residues 1-20 (MLKKLITTAVLAMLIFTLAA) form the signal peptide. Cys-21 is lipidated: N-palmitoyl cysteine. The S-diacylglycerol cysteine moiety is linked to residue Cys-21.

As to quaternary structure, the complex is composed of two ATP-binding proteins (GbuA), two transmembrane proteins (GbuB) and a solute-binding protein (GbuC).

It localises to the cell membrane. With respect to regulation, the complex is activated by an osmotic gradient or by low temperature. In terms of biological role, part of the ABC transporter complex GbuABC involved in glycine betaine uptake. Involved, with BetL and OpuC, in osmoprotection and cryoprotection of Listeria. Can also uptake carnitine when carnitine is abundant in the growth medium. In Listeria monocytogenes serotype 1/2a (strain 10403S), this protein is Glycine betaine/carnitine transport binding protein GbuC (gbuC).